Reading from the N-terminus, the 120-residue chain is NAD(P)H-quinone oxidoreductase subunit 3, chloroplastic (120 aa).

3 helical membrane passes run 7 to 27, 64 to 84, and 89 to 109; these read YDYFFVFLLIISFFSILIFSL, MFALVFVIFDVETVFLYPWAM, and FGISSFIEALIFILILIIGLV.

The protein belongs to the complex I subunit 3 family. As to quaternary structure, NDH is composed of at least 16 different subunits, 5 of which are encoded in the nucleus.

Its subcellular location is the plastid. It is found in the chloroplast thylakoid membrane. It catalyses the reaction a plastoquinone + NADH + (n+1) H(+)(in) = a plastoquinol + NAD(+) + n H(+)(out). The catalysed reaction is a plastoquinone + NADPH + (n+1) H(+)(in) = a plastoquinol + NADP(+) + n H(+)(out). Functionally, NDH shuttles electrons from NAD(P)H:plastoquinone, via FMN and iron-sulfur (Fe-S) centers, to quinones in the photosynthetic chain and possibly in a chloroplast respiratory chain. The immediate electron acceptor for the enzyme in this species is believed to be plastoquinone. Couples the redox reaction to proton translocation, and thus conserves the redox energy in a proton gradient. This Marchantia polymorpha (Common liverwort) protein is NAD(P)H-quinone oxidoreductase subunit 3, chloroplastic.